Reading from the N-terminus, the 263-residue chain is 3-oxo-5-alpha-steroid 4-dehydrogenase 1 (263 aa).

5 helical membrane passes run 16 to 33, 90 to 110, 115 to 135, 155 to 175, and 213 to 233; these read MLAALAYLQCAVGCAVLA, ILLAMFLVHYGHRCLIYPFLM, PMPLLACTMAIMFCTFNGYLQ, FLIGFGLWLAGMLINIHSDHI, and YALASWSVQGAAFAFFTFCFL.

Belongs to the steroid 5-alpha reductase family.

The protein localises to the microsome membrane. It is found in the endoplasmic reticulum membrane. The enzyme catalyses a 3-oxo-5alpha-steroid + NADP(+) = a 3-oxo-Delta(4)-steroid + NADPH + H(+). It carries out the reaction 5alpha-pregnane-3,20-dione + NADP(+) = progesterone + NADPH + H(+). It catalyses the reaction 17beta-hydroxy-5alpha-androstan-3-one + NADP(+) = testosterone + NADPH + H(+). The catalysed reaction is androst-4-ene-3,17-dione + NADPH + H(+) = 5alpha-androstan-3,17-dione + NADP(+). In terms of biological role, converts testosterone into 5-alpha-dihydrotestosterone and progesterone or corticosterone into their corresponding 5-alpha-3-oxosteroids. It plays a central role in sexual differentiation and androgen physiology. This is 3-oxo-5-alpha-steroid 4-dehydrogenase 1 (SRD5A1) from Macaca fascicularis (Crab-eating macaque).